Here is a 30-residue protein sequence, read N- to C-terminus: Hainantoxin F6-34.84 (30 aa).

Intrachain disulfides connect Cys2-Cys15 and Cys9-Cys24.

This sequence belongs to the AVIT (prokineticin) family. Expressed by the venom gland.

It is found in the secreted. This is Hainantoxin F6-34.84 from Cyriopagopus hainanus (Chinese bird spider).